We begin with the raw amino-acid sequence, 1452 residues long: Receptor-type tyrosine-protein phosphatase mu (1452 aa).

The signal sequence occupies residues 1–20 (MRTLGTCLVTLAGLLLTAAG). Residues 21-742 (ETFSGGCLFD…PEKQTDHTVK (722 aa)) lie on the Extracellular side of the membrane. Positions 22–184 (TFSGGCLFDE…VKVLGHPCTR (163 aa)) constitute an MAM domain. A disulfide bridge connects residues Cys-27 and Cys-36. 4 N-linked (GlcNAc...) asparagine glycosylation sites follow: Asn-72, Asn-92, Asn-131, and Asn-249. 2 disulfides stabilise this stretch: Cys-96–Cys-182 and Cys-206–Cys-260. The Ig-like C2-type domain maps to 186-277 (PHFLRIQNVE…VGISNYAELV (92 aa)). Fibronectin type-III domains are found at residues 284–379 (PIAP…CADP), 382–480 (GPRK…TDED), 481–587 (LPGA…SAPS), and 589–671 (PAYE…DSLQ). Residues Asn-406, Asn-414, Asn-454, Asn-534, Asn-544, Asn-598, Asn-651, and Asn-681 are each glycosylated (N-linked (GlcNAc...) asparagine). A helical membrane pass occupies residues 743-764 (IAGVIAGILLFVIIFLGVVLVM). Topologically, residues 765–1452 (KKRKLAKKRK…EVALEYLNSG (688 aa)) are cytoplasmic. Ser-821 is subject to Phosphoserine. 2 Tyrosine-protein phosphatase domains span residues 900–1154 (FKEE…ILEA) and 1186–1448 (IKEE…ALEY). Residues Asp-1063, 1095-1101 (CSAGAGR), and Gln-1139 contribute to the substrate site. Cys-1095 acts as the Phosphocysteine intermediate in catalysis. Cys-1389 functions as the Phosphocysteine intermediate in the catalytic mechanism.

It belongs to the protein-tyrosine phosphatase family. Receptor class 2B subfamily. In terms of assembly, homodimer. As to expression, most abundant in lung, less in brain and heart.

The protein resides in the cell membrane. It carries out the reaction O-phospho-L-tyrosyl-[protein] + H2O = L-tyrosyl-[protein] + phosphate. Its function is as follows. Receptor protein-tyrosine phosphatase that mediates homotypic cell-cell interactions and plays a role in adipogenic differentiation via modulation of p120 catenin/CTNND1 phosphorylation. Promotes CTNND1 dephosphorylation and prevents its cytoplasmic localization where it inhibits SLC2A4 membrane trafficking. In turn, SLC2A4 is directed to the plasma membrane and performs its glucose transporter function. The chain is Receptor-type tyrosine-protein phosphatase mu (Ptprm) from Mus musculus (Mouse).